Consider the following 116-residue polypeptide: Nitrogen regulatory PII-like protein (116 aa).

This sequence belongs to the P(II) protein family. Needs to interact with NrgA in order to localize correctly to the membrane.

The protein resides in the cell membrane. Required for full induction of the nrgAB operon under conditions of ammonium limitation. The sequence is that of Nitrogen regulatory PII-like protein (nrgB) from Bacillus subtilis (strain 168).